Reading from the N-terminus, the 176-residue chain is Lipoprotein signal peptidase (176 aa).

The next 4 helical transmembrane spans lie at 11-31 (AFVA…LDQL), 38-58 (ATMQ…VLVF), 76-96 (WFFT…MHQH), and 101-121 (LLPA…VDRL). Residues aspartate 128 and aspartate 146 contribute to the active site. A helical transmembrane segment spans residues 139-159 (WPAFNLADSAITLGVGLMLWA).

It belongs to the peptidase A8 family.

Its subcellular location is the cell inner membrane. It catalyses the reaction Release of signal peptides from bacterial membrane prolipoproteins. Hydrolyzes -Xaa-Yaa-Zaa-|-(S,diacylglyceryl)Cys-, in which Xaa is hydrophobic (preferably Leu), and Yaa (Ala or Ser) and Zaa (Gly or Ala) have small, neutral side chains.. The protein operates within protein modification; lipoprotein biosynthesis (signal peptide cleavage). This protein specifically catalyzes the removal of signal peptides from prolipoproteins. This is Lipoprotein signal peptidase from Azoarcus sp. (strain BH72).